The sequence spans 308 residues: Glycine--tRNA ligase alpha subunit (308 aa).

It belongs to the class-II aminoacyl-tRNA synthetase family. Tetramer of two alpha and two beta subunits.

Its subcellular location is the cytoplasm. The enzyme catalyses tRNA(Gly) + glycine + ATP = glycyl-tRNA(Gly) + AMP + diphosphate. The sequence is that of Glycine--tRNA ligase alpha subunit from Brucella canis (strain ATCC 23365 / NCTC 10854 / RM-666).